We begin with the raw amino-acid sequence, 35 residues long: UPF0387 membrane protein YohO (35 aa).

The helical transmembrane segment at 6 to 26 threads the bilayer; the sequence is IGVIALFLLMAIGGIGGVMLA.

It belongs to the UPF0387 family.

It localises to the cell inner membrane. The protein is UPF0387 membrane protein YohO of Salmonella paratyphi A (strain ATCC 9150 / SARB42).